Reading from the N-terminus, the 345-residue chain is Phosphate acyltransferase (345 aa).

This sequence belongs to the PlsX family. As to quaternary structure, homodimer. Probably interacts with PlsY.

The protein localises to the cytoplasm. The enzyme catalyses a fatty acyl-[ACP] + phosphate = an acyl phosphate + holo-[ACP]. The protein operates within lipid metabolism; phospholipid metabolism. Its function is as follows. Catalyzes the reversible formation of acyl-phosphate (acyl-PO(4)) from acyl-[acyl-carrier-protein] (acyl-ACP). This enzyme utilizes acyl-ACP as fatty acyl donor, but not acyl-CoA. In Wolbachia sp. subsp. Drosophila simulans (strain wRi), this protein is Phosphate acyltransferase.